A 268-amino-acid chain; its full sequence is MEVTSQSTLPPGFRFHPTDEELIVYYLRNQTMSKPCPVSIIPEVDIYKFDPWQLPEKTEFGENEWYFFSPRERKYPNGVRPNRAAVSGYWKATGTDKAIHSGSSNVGVKKALVFYKGRPPKGIKTDWIMHEYRLHDSRKASTKRNGSMRLDEWVLCRIYKKRGASKLLNEQEGFMDEVLMEDETKVVVNEAERRTEEEIMMMTSMKLPRTCSLAHLLEMDYMGPVSHIDNFSQFDHLHQPDSESSWFGDLQFNQDEILNHHRQAMFKF.

In terms of domain architecture, NAC spans 9-161; sequence LPPGFRFHPT…EWVLCRIYKK (153 aa). Residues 106 to 167 mediate DNA binding; sequence VGVKKALVFY…IYKKRGASKL (62 aa).

Expressed in senescing leaves, petals and sepals.

It localises to the nucleus. In terms of biological role, transcription activator that binds to, and transactivates the promoter of the abscisic aldehyde oxidase AAO3. Promotes chlorophyll degradation in leaves by enhancing transcription of AAO3, which leads to increased levels of the senescence-inducing hormone abscisic acid (ABA). Involved in the control of dehydration in senescing leaves. Binds to the DNA sequence 5'-CACGTAAGT-3' of SAG113 promoter. SAG113 acts as a negative regulator of ABA signaling for stomatal closure in leaves, and controls water loss during leaf senescence. Transcription factor of the NAC family involved in senescence. May function in the transition between active cell division and cell expansion. Required for normal seed development and morphology. The sequence is that of NAC transcription factor 29 (NAC029) from Arabidopsis thaliana (Mouse-ear cress).